A 295-amino-acid chain; its full sequence is Nucleotide-binding protein LACR_1047 (295 aa).

12–19 (GMSGAGKT) lines the ATP pocket. Position 63-66 (63-66 (DMRS)) interacts with GTP.

It belongs to the RapZ-like family.

Functionally, displays ATPase and GTPase activities. The chain is Nucleotide-binding protein LACR_1047 from Lactococcus lactis subsp. cremoris (strain SK11).